The chain runs to 366 residues: MWPRSHRHLCLAFLLVCVLSAISFLIHFHQDSIRHGLGLSVLCPDRRLVTPPVAIFCLPGTPMSPNTSSPCPQHPASLSGTWTIYPDGRFGNQMGQYATLLALAQLNGRRAFILPAMHAALAPVFRITLPVLAPEVDSRTPWQELRLHDWMSEEYADLGDPFLKLSGFPCSWTFFHHLREQIRSEFTLHDHLREEAQSVLRRLRLGRSGARPRTFVGVHVRRGDYLQVMPQRWKGVVANSAYLREAMDWFRARHEAPVFVVTSNGMEWCRENIDASKGDVMFAGDGQEASPWKDFALLAQCNHTIMTIGTFGFWAAYLAGGDTVYLANFTLPDSEFLKIFKPEAAFLPEWVGINADLSPLWPLAEP.

The Cytoplasmic portion of the chain corresponds to 1-8; it reads MWPRSHRH. A helical; Signal-anchor for type II membrane protein transmembrane segment spans residues 9 to 25; the sequence is LCLAFLLVCVLSAISFL. Over 26-366 the chain is Lumenal; the sequence is IHFHQDSIRH…LSPLWPLAEP (341 aa). N-linked (GlcNAc...) asparagine glycosylation is found at Asn66, Asn302, and Asn328.

Belongs to the glycosyltransferase 11 family.

It is found in the golgi apparatus. It localises to the golgi stack membrane. It catalyses the reaction a beta-D-galactosyl-(1-&gt;4)-N-acetyl-beta-D-glucosaminyl derivative + GDP-beta-L-fucose = an alpha-L-Fuc-(1-&gt;2)-beta-D-Gal-(1-&gt;4)-beta-D-GlcNAc derivative + GDP + H(+). The catalysed reaction is a ganglioside GA1 + GDP-beta-L-fucose = a ganglioside Fuc-GA1 + GDP + H(+). The enzyme catalyses a beta-D-Gal-(1-&gt;3)-beta-D-GlcNAc-(1-&gt;3)-beta-D-Gal-(1-&gt;4)-beta-D-Glc-(1&lt;-&gt;1')-Cer(d18:1(4E)) + GDP-beta-L-fucose = alpha-L-fucosyl-(1-&gt;2)- beta-D-galactosyl-(1-&gt;3)-N-acetyl-beta-D-glucosaminyl-(1-&gt;3)-beta-D-galactosyl-(1-&gt;4)-beta-D-glucosyl-(1&lt;-&gt;1')-N-acylsphing-4-enine + GDP + H(+). It carries out the reaction a neolactoside nLc4Cer(d18:1(4E)) + GDP-beta-L-fucose = a neolactoside IV(2)-alpha-Fuc-nLc4Cer(d18:1(4E)) + GDP + H(+). It catalyses the reaction a ganglioside GM1 + GDP-beta-L-fucose = a ganglioside Fuc-GM1 + GDP + H(+). The catalysed reaction is beta-D-galactosyl-(1-&gt;3)-N-acetyl-D-galactosamine + GDP-beta-L-fucose = alpha-L-fucosyl-(1-&gt;2)-beta-D-galactosyl-(1-&gt;3)-N-acetyl-D-galactosamine + GDP + H(+). Its pathway is protein modification; protein glycosylation. In terms of biological role, catalyzes the transfer of L-fucose, from a guanosine diphosphate-beta-L-fucose, to the terminal galactose residue of glycoconjugates through an alpha(1,2) linkage leading to H antigen synthesis that is an intermediate substrate in the synthesis of ABO blood group antigens. H antigen is essential for maturation of the glomerular layer of the main olfactory bulb, in cell migration and early cell-cell contacts during tumor associated angiogenesis. Preferentially fucosylates soluble lactose and to a lesser extent fucosylates glycolipids gangliosides GA1 and GM1a. The sequence is that of Galactoside alpha-(1,2)-fucosyltransferase 1 from Saimiri sciureus (Common squirrel monkey).